The sequence spans 419 residues: Tol-Pal system protein TolB (419 aa).

The first 19 residues, M1 to A19, serve as a signal peptide directing secretion.

Belongs to the TolB family. In terms of assembly, the Tol-Pal system is composed of five core proteins: the inner membrane proteins TolA, TolQ and TolR, the periplasmic protein TolB and the outer membrane protein Pal. They form a network linking the inner and outer membranes and the peptidoglycan layer.

The protein localises to the periplasm. Its function is as follows. Part of the Tol-Pal system, which plays a role in outer membrane invagination during cell division and is important for maintaining outer membrane integrity. This chain is Tol-Pal system protein TolB, found in Legionella pneumophila (strain Paris).